The chain runs to 224 residues: Ribonuclease 3 (224 aa).

In terms of domain architecture, RNase III spans 4–127 (IEKLERSLTY…IIGAIHLEAG (124 aa)). Glu40 contacts Mg(2+). Residue Asp44 is part of the active site. Mg(2+) contacts are provided by Asp113 and Glu116. Glu116 is an active-site residue. The region spanning 154-223 (DYKTKLQEIT…AKIALEKLGA (70 aa)) is the DRBM domain.

It belongs to the ribonuclease III family. As to quaternary structure, homodimer. Mg(2+) is required as a cofactor.

The protein resides in the cytoplasm. It carries out the reaction Endonucleolytic cleavage to 5'-phosphomonoester.. In terms of biological role, digests double-stranded RNA. Involved in the processing of primary rRNA transcript to yield the immediate precursors to the large and small rRNAs (23S and 16S). Processes some mRNAs, and tRNAs when they are encoded in the rRNA operon. Processes pre-crRNA and tracrRNA of type II CRISPR loci if present in the organism. The polypeptide is Ribonuclease 3 (Campylobacter jejuni (strain RM1221)).